Consider the following 181-residue polypeptide: Large ribosomal subunit protein bL17 (181 aa).

Residues 129–181 (AEKSEKSAKTAKAAKAPAKKATAKKASTKAVAAKKKAVKKAQKKDRAASAARA) form a disordered region. Over residues 145–171 (PAKKATAKKASTKAVAAKKKAVKKAQK) the composition is skewed to basic residues.

Belongs to the bacterial ribosomal protein bL17 family. As to quaternary structure, part of the 50S ribosomal subunit. Contacts protein L32.

The polypeptide is Large ribosomal subunit protein bL17 (Bdellovibrio bacteriovorus (strain ATCC 15356 / DSM 50701 / NCIMB 9529 / HD100)).